Reading from the N-terminus, the 170-residue chain is Large ribosomal subunit protein uL11 (170 aa).

Belongs to the universal ribosomal protein uL11 family. Part of the ribosomal stalk of the 50S ribosomal subunit. Interacts with L10 and the large rRNA to form the base of the stalk. L10 forms an elongated spine to which L12 dimers bind in a sequential fashion forming a multimeric L10(L12)X complex.

Forms part of the ribosomal stalk which helps the ribosome interact with GTP-bound translation factors. The chain is Large ribosomal subunit protein uL11 from Saccharolobus islandicus (strain Y.N.15.51 / Yellowstone #2) (Sulfolobus islandicus).